A 219-amino-acid polypeptide reads, in one-letter code: 3-demethoxyubiquinol 3-hydroxylase (219 aa).

Positions 21-51 (RTLTPGTTQAERTPAHAAPAPDAPEAGTLPS) are disordered. Positions 35 to 46 (AHAAPAPDAPEA) are enriched in low complexity. Fe cation is bound by residues E68, E98, H101, E150, E182, and H185.

The protein belongs to the COQ7 family. Fe cation serves as cofactor.

It is found in the cell membrane. It catalyses the reaction a 5-methoxy-2-methyl-3-(all-trans-polyprenyl)benzene-1,4-diol + AH2 + O2 = a 3-demethylubiquinol + A + H2O. The protein operates within cofactor biosynthesis; ubiquinone biosynthesis. Functionally, catalyzes the hydroxylation of 2-nonaprenyl-3-methyl-6-methoxy-1,4-benzoquinol during ubiquinone biosynthesis. The chain is 3-demethoxyubiquinol 3-hydroxylase from Alcanivorax borkumensis (strain ATCC 700651 / DSM 11573 / NCIMB 13689 / SK2).